The following is a 741-amino-acid chain: Transketolase, chloroplastic (741 aa).

The N-terminal 67 residues, 1-67 (MASSSSLTLS…TKQQFSVRAS (67 aa)), are a transit peptide targeting the chloroplast. H103 is a binding site for substrate. Residues H143 and 192-194 (GPL) each bind thiamine diphosphate. D233 is a binding site for Mg(2+). Residues G234 and N263 each contribute to the thiamine diphosphate site. Residues N263 and I265 each contribute to the Mg(2+) site. Substrate contacts are provided by H340, R434, and S461. H340 is a binding site for thiamine diphosphate. Thiamine diphosphate contacts are provided by E488 and F515. E488 acts as the Proton donor in catalysis. Residues H539, D547, and R598 each contribute to the substrate site.

The protein belongs to the transketolase family. In terms of assembly, homodimer. The cofactor is Mg(2+). Requires Ca(2+) as cofactor. Mn(2+) serves as cofactor. It depends on Co(2+) as a cofactor. Thiamine diphosphate is required as a cofactor.

It localises to the plastid. It is found in the chloroplast thylakoid membrane. It carries out the reaction D-sedoheptulose 7-phosphate + D-glyceraldehyde 3-phosphate = aldehydo-D-ribose 5-phosphate + D-xylulose 5-phosphate. The protein operates within carbohydrate biosynthesis; Calvin cycle. In terms of biological role, catalyzes the reversible transfer of a two-carbon ketol group from fructose-6-phosphate or sedoheptulose-7-phosphate to glyceraldehyde-3-phosphate to yield xylulose-5-phosphate and erythrose-4-phosphate or ribose-5-phosphate, respectively. In Solanum tuberosum (Potato), this protein is Transketolase, chloroplastic.